The chain runs to 484 residues: Sperm motility kinase 2B (484 aa).

Residues 8 to 256 (YVMLETIGHG…VAEVMVHPWV (249 aa)) enclose the Protein kinase domain. ATP contacts are provided by residues 14 to 22 (IGHGGCSKV) and Lys37. The Proton acceptor role is filled by Asp127. The UBA domain maps to 272–314 (PLKPNPAIVKAMGYIGFQAQDIEDSLRQRKFNETMASYCLLKK). Polar residues-rich tracts occupy residues 356–373 (PTSL…CGRS) and 422–434 (SSDD…TSAS). 2 disordered regions span residues 356–400 (PTSL…TMDH) and 422–450 (SSDD…RGIK).

The protein belongs to the protein kinase superfamily. CAMK Ser/Thr protein kinase family. Smok subfamily. As to expression, testis-specific. Expressed in the testis from 22 days postpartum (22 dpp).

It catalyses the reaction L-seryl-[protein] + ATP = O-phospho-L-seryl-[protein] + ADP + H(+). It carries out the reaction L-threonyl-[protein] + ATP = O-phospho-L-threonyl-[protein] + ADP + H(+). In terms of biological role, may play a role in sperm motility, especially in the regulation of flagellar function. The protein is Sperm motility kinase 2B of Mus musculus (Mouse).